The following is a 197-amino-acid chain: Endo-1,4-beta-xylanase A (197 aa).

The GH11 domain occupies 1–197 (SGTPSSTGTD…SSGTATITVT (197 aa)). Catalysis depends on glutamate 87, which acts as the Nucleophile. Cysteines 111 and 160 form a disulfide. The active-site Proton donor is the glutamate 184.

This sequence belongs to the glycosyl hydrolase 11 (cellulase G) family.

It localises to the secreted. It carries out the reaction Endohydrolysis of (1-&gt;4)-beta-D-xylosidic linkages in xylans.. It participates in glycan degradation; xylan degradation. Its function is as follows. Hydrolyzes xylans into xylobiose and xylose. In Schizophyllum commune (Split gill fungus), this protein is Endo-1,4-beta-xylanase A (XYNA).